Here is a 359-residue protein sequence, read N- to C-terminus: UPF0283 membrane protein Atu1356 (359 aa).

A disordered region spans residues 1 to 39; sequence MKAPTQNDPQTRRPAAFTLETEEAARPSATQKRAPRSFD. The next 2 membrane-spanning stretches (helical) occupy residues 75–95 and 108–128; these read FGKL…GLWA and WLGY…LALV.

This sequence belongs to the UPF0283 family.

It localises to the cell inner membrane. The sequence is that of UPF0283 membrane protein Atu1356 from Agrobacterium fabrum (strain C58 / ATCC 33970) (Agrobacterium tumefaciens (strain C58)).